Consider the following 156-residue polypeptide: Small ribosomal subunit protein uS7 (156 aa).

It belongs to the universal ribosomal protein uS7 family. Part of the 30S ribosomal subunit. Contacts proteins S9 and S11.

One of the primary rRNA binding proteins, it binds directly to 16S rRNA where it nucleates assembly of the head domain of the 30S subunit. Is located at the subunit interface close to the decoding center, probably blocks exit of the E-site tRNA. The protein is Small ribosomal subunit protein uS7 of Yersinia enterocolitica serotype O:8 / biotype 1B (strain NCTC 13174 / 8081).